The following is a 252-amino-acid chain: 3-dehydroquinate dehydratase (252 aa).

3-dehydroquinate contacts are provided by residues Ser-21, 46–48 (EWR), and Arg-82. His-143 functions as the Proton donor/acceptor in the catalytic mechanism. Lys-170 (schiff-base intermediate with substrate) is an active-site residue. Arg-213, Ser-232, and Gln-236 together coordinate 3-dehydroquinate.

Belongs to the type-I 3-dehydroquinase family. As to quaternary structure, homodimer.

It catalyses the reaction 3-dehydroquinate = 3-dehydroshikimate + H2O. Its pathway is metabolic intermediate biosynthesis; chorismate biosynthesis; chorismate from D-erythrose 4-phosphate and phosphoenolpyruvate: step 3/7. Involved in the third step of the chorismate pathway, which leads to the biosynthesis of aromatic amino acids. Catalyzes the cis-dehydration of 3-dehydroquinate (DHQ) and introduces the first double bond of the aromatic ring to yield 3-dehydroshikimate. The polypeptide is 3-dehydroquinate dehydratase (Shigella sonnei (strain Ss046)).